Consider the following 548-residue polypeptide: 2-succinyl-5-enolpyruvyl-6-hydroxy-3-cyclohexene-1-carboxylate synthase (548 aa).

The protein belongs to the TPP enzyme family. MenD subfamily. In terms of assembly, homodimer. It depends on Mg(2+) as a cofactor. Mn(2+) serves as cofactor. Thiamine diphosphate is required as a cofactor.

It carries out the reaction isochorismate + 2-oxoglutarate + H(+) = 5-enolpyruvoyl-6-hydroxy-2-succinyl-cyclohex-3-ene-1-carboxylate + CO2. Its pathway is quinol/quinone metabolism; 1,4-dihydroxy-2-naphthoate biosynthesis; 1,4-dihydroxy-2-naphthoate from chorismate: step 2/7. It participates in quinol/quinone metabolism; menaquinone biosynthesis. Catalyzes the thiamine diphosphate-dependent decarboxylation of 2-oxoglutarate and the subsequent addition of the resulting succinic semialdehyde-thiamine pyrophosphate anion to isochorismate to yield 2-succinyl-5-enolpyruvyl-6-hydroxy-3-cyclohexene-1-carboxylate (SEPHCHC). In Mycolicibacterium vanbaalenii (strain DSM 7251 / JCM 13017 / BCRC 16820 / KCTC 9966 / NRRL B-24157 / PYR-1) (Mycobacterium vanbaalenii), this protein is 2-succinyl-5-enolpyruvyl-6-hydroxy-3-cyclohexene-1-carboxylate synthase.